Reading from the N-terminus, the 543-residue chain is Hydroxylamine reductase (543 aa).

Cys-3, Cys-6, Cys-15, and Cys-21 together coordinate [4Fe-4S] cluster. His-244, Glu-268, Cys-312, Cys-399, Cys-427, Cys-452, Glu-486, and Lys-488 together coordinate hybrid [4Fe-2O-2S] cluster. Cysteine persulfide is present on Cys-399.

It belongs to the HCP family. It depends on [4Fe-4S] cluster as a cofactor. Requires hybrid [4Fe-2O-2S] cluster as cofactor.

It localises to the cytoplasm. The catalysed reaction is A + NH4(+) + H2O = hydroxylamine + AH2 + H(+). Its function is as follows. Catalyzes the reduction of hydroxylamine to form NH(3) and H(2)O. In Methanocella arvoryzae (strain DSM 22066 / NBRC 105507 / MRE50), this protein is Hydroxylamine reductase.